Reading from the N-terminus, the 749-residue chain is MTTITTSNLGFPRLGRKREWKKAIESYWAKKIDKAELDQKISDLHRENLLLQKHYNLDSVPVGDFSLYDHILDTSLLFNIIPERFQGREVNDDLLFDIARGNKEHVASALIKWFNTNYHYIVPEWDNVEPKVNHNVLLDRFNYAKSLNVNAHPVIVGPITFVKLSKGGHQSFEEKVQTLLPLYKEVLQALVDAGAEYIQVDEPVLVTDESEAYEAITREAYDYFDKAGLADKLVIQTYFERANVKFLSSLPVGGLGLDFVHDNGYNLKQIESGDFDSSKTLYAGIIDGRNVWAADIEAKKKLIETLQGHAKHIVIQPSSSLLHVPVSLDDETLEQSIEEGLSFATEKLDELDALRRLFNQNDSAKYDKLKARYERFQSQSFKNLEYDFDSVPTSRKSPFPERKKAQDARLHLPDLPTTTIGSFPQTQEVRKYRADWKNKRISDEAYNNFLESEIARWIKIQEDIGLDVLVHGEFERNDMVEFFGEKLQGFLVTKFGWVQSYGSRAVKPPVIYGDVKWTEPLTVKETVYAQSLTDKPVKGMLTGPVTILNWSFERVDVPRKVVQDQIALAIDEEVLALEEAGIKVIQVDEPALREGLPLRSEYHEQYLADAVNSFKLATSSVQDETQIHTHMCYSQFGQIIHAIHELDADVISIETSRSHGDLIKDFEDINYDLGIGLGVYDIHSPRIPTEDEIATAIDRSLQQIDRSLFWVNPDCGLKTRKEDEVKDALTVLVNTVRKKRASNNQNKPA.

5-methyltetrahydropteroyltri-L-glutamate contacts are provided by residues 18-21 and Lys112; that span reads REWK. Residues 420–422 and Glu473 contribute to the L-homocysteine site; that span reads IGS. L-methionine is bound by residues 420-422 and Glu473; that span reads IGS. Trp550 contacts 5-methyltetrahydropteroyltri-L-glutamate. Residue Asp588 participates in L-homocysteine binding. Asp588 contributes to the L-methionine binding site. Glu594 lines the 5-methyltetrahydropteroyltri-L-glutamate pocket. 3 residues coordinate Zn(2+): His630, Cys632, and Glu654. His683 acts as the Proton donor in catalysis. Position 715 (Cys715) interacts with Zn(2+).

It belongs to the vitamin-B12 independent methionine synthase family. Zn(2+) is required as a cofactor.

It catalyses the reaction 5-methyltetrahydropteroyltri-L-glutamate + L-homocysteine = tetrahydropteroyltri-L-glutamate + L-methionine. It functions in the pathway amino-acid biosynthesis; L-methionine biosynthesis via de novo pathway; L-methionine from L-homocysteine (MetE route): step 1/1. Functionally, catalyzes the transfer of a methyl group from 5-methyltetrahydrofolate to homocysteine resulting in methionine formation. The polypeptide is 5-methyltetrahydropteroyltriglutamate--homocysteine methyltransferase (Staphylococcus haemolyticus (strain JCSC1435)).